The chain runs to 212 residues: Outer-membrane lipoprotein carrier protein (212 aa).

Residues 1–29 (MSSARRRALGFSFQALLLCAAGWHGAAQA) form the signal peptide.

The protein belongs to the LolA family. Monomer.

Its subcellular location is the periplasm. Its function is as follows. Participates in the translocation of lipoproteins from the inner membrane to the outer membrane. Only forms a complex with a lipoprotein if the residue after the N-terminal Cys is not an aspartate (The Asp acts as a targeting signal to indicate that the lipoprotein should stay in the inner membrane). This Leptothrix cholodnii (strain ATCC 51168 / LMG 8142 / SP-6) (Leptothrix discophora (strain SP-6)) protein is Outer-membrane lipoprotein carrier protein.